Reading from the N-terminus, the 196-residue chain is GTP cyclohydrolase-2 (196 aa).

49–53 (RVHSE) provides a ligand contact to GTP. Residues Cys-54, Cys-65, and Cys-67 each coordinate Zn(2+). GTP contacts are provided by residues Gln-70, 92–94 (EGR), and Thr-114. Asp-126 acts as the Proton acceptor in catalysis. Arg-128 serves as the catalytic Nucleophile. GTP is bound by residues Thr-149 and Lys-154.

The protein belongs to the GTP cyclohydrolase II family. In terms of assembly, homodimer. It depends on Zn(2+) as a cofactor.

The catalysed reaction is GTP + 4 H2O = 2,5-diamino-6-hydroxy-4-(5-phosphoribosylamino)-pyrimidine + formate + 2 phosphate + 3 H(+). Its pathway is cofactor biosynthesis; riboflavin biosynthesis; 5-amino-6-(D-ribitylamino)uracil from GTP: step 1/4. Catalyzes the conversion of GTP to 2,5-diamino-6-ribosylamino-4(3H)-pyrimidinone 5'-phosphate (DARP), formate and pyrophosphate. The polypeptide is GTP cyclohydrolase-2 (Salmonella choleraesuis (strain SC-B67)).